A 112-amino-acid chain; its full sequence is Thioredoxin (112 aa).

Residues 2-112 (SEDSATVAVT…ALLRELSDAL (111 aa)) form the Thioredoxin domain. C35 and C38 are disulfide-bonded.

Belongs to the thioredoxin family.

In terms of biological role, participates in various redox reactions through the reversible oxidation of its active center dithiol to a disulfide and catalyzes dithiol-disulfide exchange reactions. The protein is Thioredoxin (trxA) of Mycolicibacterium smegmatis (Mycobacterium smegmatis).